An 886-amino-acid polypeptide reads, in one-letter code: DNA mismatch repair protein MutS (886 aa).

626–633 (GPNMGGKS) contacts ATP.

The protein belongs to the DNA mismatch repair MutS family.

In terms of biological role, this protein is involved in the repair of mismatches in DNA. It is possible that it carries out the mismatch recognition step. This protein has a weak ATPase activity. This is DNA mismatch repair protein MutS from Burkholderia ambifaria (strain ATCC BAA-244 / DSM 16087 / CCUG 44356 / LMG 19182 / AMMD) (Burkholderia cepacia (strain AMMD)).